The primary structure comprises 513 residues: Sterol 14-alpha demethylase (513 aa).

A helical transmembrane segment spans residues 8-28; sequence AYALLAFVAIMALNVTYQFLF. N-linked (GlcNAc...) asparagine glycosylation is found at asparagine 32 and asparagine 332. Residue cysteine 453 coordinates heme.

This sequence belongs to the cytochrome P450 family. The cofactor is heme.

It localises to the endoplasmic reticulum membrane. It catalyses the reaction a 14alpha-methyl steroid + 3 reduced [NADPH--hemoprotein reductase] + 3 O2 = a Delta(14) steroid + formate + 3 oxidized [NADPH--hemoprotein reductase] + 4 H2O + 4 H(+). The catalysed reaction is a 14alpha-methyl steroid + reduced [NADPH--hemoprotein reductase] + O2 = a 14alpha-hydroxymethyl steroid + oxidized [NADPH--hemoprotein reductase] + H2O + H(+). The enzyme catalyses a 14alpha-hydroxymethyl steroid + reduced [NADPH--hemoprotein reductase] + O2 = a 14alpha-formyl steroid + oxidized [NADPH--hemoprotein reductase] + 2 H2O + H(+). It carries out the reaction a 14alpha-formyl steroid + reduced [NADPH--hemoprotein reductase] + O2 = a Delta(14) steroid + formate + oxidized [NADPH--hemoprotein reductase] + H2O + 2 H(+). It catalyses the reaction lanosterol + 3 reduced [NADPH--hemoprotein reductase] + 3 O2 = 4,4-dimethyl-5alpha-cholesta-8,14,24-trien-3beta-ol + formate + 3 oxidized [NADPH--hemoprotein reductase] + 4 H2O + 4 H(+). The catalysed reaction is lanosterol + reduced [NADPH--hemoprotein reductase] + O2 = 32-hydroxylanosterol + oxidized [NADPH--hemoprotein reductase] + H2O + H(+). The enzyme catalyses 32-hydroxylanosterol + reduced [NADPH--hemoprotein reductase] + O2 = 32-oxolanosterol + oxidized [NADPH--hemoprotein reductase] + 2 H2O + H(+). It carries out the reaction 32-oxolanosterol + reduced [NADPH--hemoprotein reductase] + O2 = 4,4-dimethyl-5alpha-cholesta-8,14,24-trien-3beta-ol + formate + oxidized [NADPH--hemoprotein reductase] + H2O + 2 H(+). It catalyses the reaction eburicol + 3 reduced [NADPH--hemoprotein reductase] + 3 O2 = 14-demethyleburicol + formate + 3 oxidized [NADPH--hemoprotein reductase] + 4 H2O + 4 H(+). The catalysed reaction is eburicol + reduced [NADPH--hemoprotein reductase] + O2 = 32-hydroxyeburicol + oxidized [NADPH--hemoprotein reductase] + H2O + H(+). The enzyme catalyses 32-hydroxyeburicol + reduced [NADPH--hemoprotein reductase] + O2 = 32-oxoeburicol + oxidized [NADPH--hemoprotein reductase] + 2 H2O + H(+). It carries out the reaction 32-oxoeburicol + reduced [NADPH--hemoprotein reductase] + O2 = 14-demethyleburicol + formate + oxidized [NADPH--hemoprotein reductase] + H2O + 2 H(+). Its pathway is steroid biosynthesis; sterol biosynthesis. Functionally, sterol 14alpha-demethylase, encoded by cyp51A, cyp51B and cyp51C, that plays a critical role in the third module of ergosterol biosynthesis pathway, being ergosterol the major sterol component in fungal membranes that participates in a variety of functions. The third module or late pathway involves the ergosterol synthesis itself through consecutive reactions that mainly occur in the endoplasmic reticulum (ER) membrane. In filamentous fungi, during the initial step of this module, lanosterol (lanosta-8,24-dien-3beta-ol) can be metabolized to eburicol. Sterol 14alpha-demethylase catalyzes the three-step oxidative removal of the 14alpha-methyl group (C-32) of both these sterols in the form of formate, and converts eburicol and lanosterol to 14-demethyleburicol (4,4,24-trimethylergosta-8,14,24(28)-trienol) and 4,4-dimethyl-5alpha-cholesta-8,14,24-trien-3beta-ol, respectively, which are further metabolized by other enzymes in the pathway to ergosterol. Can also use substrates not intrinsic to fungi, such as 24,25-dihydrolanosterol (DHL), producing 4,4'-dimethyl-8,14-cholestadien-3-beta-ol, but at lower rates than the endogenous substrates. As a target of azole drugs, plays a crucial role in azole drug susceptibility. This Aspergillus flavus (strain ATCC 200026 / FGSC A1120 / IAM 13836 / NRRL 3357 / JCM 12722 / SRRC 167) protein is Sterol 14-alpha demethylase.